Reading from the N-terminus, the 91-residue chain is C-C motif chemokine 5 (91 aa).

The signal sequence occupies residues 1–23 (MKVFAAALAVILATATFCTPASA). 2 cysteine pairs are disulfide-bonded: cysteine 33/cysteine 57 and cysteine 34/cysteine 73.

The protein belongs to the intercrine beta (chemokine CC) family.

It localises to the secreted. Chemoattractant for blood monocytes, memory T-helper cells and eosinophils. Causes the release of histamine from basophils and activates eosinophils. May activate several chemokine receptors including CCR1, CCR3, CCR4 and CCR5. May also be an agonist of the G protein-coupled receptor GPR75. Together with GPR75, may play a role in neuron survival through activation of a downstream signaling pathway involving the PI3, Akt and MAP kinases. By activating GPR75 may also play a role in insulin secretion by islet cells. This Equus caballus (Horse) protein is C-C motif chemokine 5 (CCL5).